Here is a 216-residue protein sequence, read N- to C-terminus: DDB1- and CUL4-associated factor 16 (216 aa).

The tract at residues 1 to 42 (MGPRNPSPDHLSESESEEEENISYLNESSGEEWDSSEEEDSM) is disordered. A compositionally biased stretch (acidic residues) spans 29 to 41 (SGEEWDSSEEEDS). Lysine 61 is modified (N6-acetyllysine).

In terms of assembly, interacts with DDB1 and CUL4A.

It is found in the nucleus. It participates in protein modification; protein ubiquitination. Its function is as follows. Functions as a substrate recognition component for CUL4-DDB1 E3 ubiquitin-protein ligase complex, which mediates ubiquitination and proteasome-dependent degradation of nuclear proteins. This Homo sapiens (Human) protein is DDB1- and CUL4-associated factor 16.